Consider the following 125-residue polypeptide: Aspercryptin biosynthesis cluster protein K (125 aa).

Residues 104–125 form a disordered region; sequence QRAESVAGDSRPREHRQGAVGY. Positions 113–125 are enriched in basic and acidic residues; it reads SRPREHRQGAVGY.

It participates in secondary metabolite biosynthesis. Its function is as follows. Part of the gene cluster that mediates the biosynthesis of aspercryptins, linear lipopeptides built from six amino acids including 2 highly unusual and nonproteogenic amino acids, 2-amino-octanoic acid (2aoa) and 2-amino-dodecanol (2adol). The core structure of aspercryptins is as follows: Ser/Ala-Thr-Ile/Val-2aoa-Asn-2adol. The first step of aspercryptin biosynthesis is the generation of the fatty acid precursors, octanoic and dodecanoic acids, by the FAS subunits atnF and atnM. The fatty acid precursors are likely transformed into the corresponding alpha-amino fatty acids in three steps. First, they are hydroxylated by the cytochrome P450 monooxygenase atnE, then oxidized to the corresponding alpha-keto acids by the NAD(P)-dependent oxidoreductase atnD, and finally converted to the alpha-amino fatty acids by the PLP-dependent aminotransferases atnH or atnJ. the alpha-amino fatty acids, 2-amino-octanoic and 2-amino-dodecanoic acids, are recognized, activated, and covalently tethered to the NRPS atnA by its fourth and sixth adenylation domains. The second module of atnA is the Thr module and contains an epimerase (E) domain responsible for the epimerization of Thr to D-allo-Thr. Additionally, despite atnA having only one epimerase domain, the first amino acid of aspercryptin A1 is D-Ser, suggesting that serine is either loaded directly as D-Ser on the first module or that the epimerase domain in the threonine module epimerizes both L-Ser and L-Thr. After condensation of the hexapeptide of aspercryptin, the C-terminal reductase (TE) domain might be involved in the reductive release and production of the aldehyde hexapeptide. Further reduction would generate aspercryptins. The variety of aspercryptins produced reflects the flexibility of the atnA NRPS, allowing incorporation of alanine instead of serine, valine for isoleucine, and a C10 fatty amino alcohol instead of the C12 version. AtnB seems to be involved in the selectivity for Ile versus Val by the third module. Moreover, type B, C and D aspercryptins have an additional N-terminal cichorine, acetyl and propionyl group respectively. The sequence is that of Aspercryptin biosynthesis cluster protein K from Emericella nidulans (strain FGSC A4 / ATCC 38163 / CBS 112.46 / NRRL 194 / M139) (Aspergillus nidulans).